The primary structure comprises 566 residues: MNDSIQLSGLSRQLVQANLLDEKTAVQAQAQAQRNKLSLVTHLVQSKLVSGLALAELSAEQFGIAYCDLNSLDKESFPRDAISEKLVRQHRVIPLWRRGNKLFVGISDPANHQAINDVQFSTGLTTEAILVEDDKLGLAIDKLFESATDGLAGLDDVDLEGLDIGSADKSTQEDASAEADDAPVVRFVNKMLLDAIKGGSSDLHFEPYEKIYRVRFRTDGMLHEVAKPPIQLASRISARLKVMAGLDISERRKPQDGRIKMRVSKTKSIDFRVNTLPTLWGEKIVMRILDSSSAQMGIDALGYEEDQKELYLAALKQPQGMILVTGPTGSGKTVSLYTGLNILNTTDINISTAEDPVEINLEGINQVNVNPRQGMDFSQALRAFLRQDPDVIMVGEIRDLETAEIAIKAAQTGHMVMSTLHTNSAAETLTRLLNMGVPAFNLATSVNLIIAQRLARKLCSHCKKEHEVPRETLLHEGFPEDKIGTFKLYSPVGCDHCKNGYKGRVGIYEVVKNTPALQRIIMEEGNSIEIAEQARKEGFNDLRTSGLLKAMQGITSLEEVNRVTKD.

326–333 (GPTGSGKT) contacts ATP. Positions 459, 462, 494, and 497 each coordinate Zn(2+).

The protein belongs to the GSP E family. Homohexamer. Interacts with PilC. Interacts with FimX; this interaction positively regulates T4P assembly and twitching motility by promoting the activity of the PilB ATPase.

Its subcellular location is the cytoplasm. Functionally, ATPase component of the type IV pilus (T4P) that plays a role in surface and host cell adhesion, colonization, biofilm maturation, virulence, and twitching, a form of surface-associated motility facilitated by cycles of extension, adhesion, and retraction of T4P fibers. Acts as a molecular motor to provide the energy that is required for biogenesis of the pilus and the extrusion of substrates generated in the cytoplasm. PilB ATPase activity is also essential for T4P extension while antagonist PilT ATPase activity is required for T4P retraction. The polypeptide is Type IV pilus assembly ATPase PilB (pilB) (Pseudomonas aeruginosa (strain ATCC 15692 / DSM 22644 / CIP 104116 / JCM 14847 / LMG 12228 / 1C / PRS 101 / PAO1)).